A 223-amino-acid chain; its full sequence is von Willebrand factor C domain-containing protein 2-like (223 aa).

Positions 1 to 21 are cleaved as a signal peptide; sequence MGPFLPAICVVLLALNAAVSP. 2 consecutive VWFC domains span residues 51-110 and 114-172; these read KGCV…PECK and NFCE…PICK.

It localises to the secreted. The protein localises to the synapse. Its function is as follows. May play a role in bone differentiation and matrix mineralization. May play a role in neural development. The chain is von Willebrand factor C domain-containing protein 2-like (vwc2l) from Danio rerio (Zebrafish).